Consider the following 216-residue polypeptide: Small ribosomal subunit protein uS3c (216 aa).

Residues 43–118 form the KH type-2 domain; that stretch reads IKNYIQKNRR…KLNIAIVKVT (76 aa).

Belongs to the universal ribosomal protein uS3 family. In terms of assembly, part of the 30S ribosomal subunit.

The protein localises to the plastid. It is found in the chloroplast. The chain is Small ribosomal subunit protein uS3c (rps3) from Phaseolus angularis (Azuki bean).